The chain runs to 268 residues: 4-hydroxy-tetrahydrodipicolinate reductase (268 aa).

Residues 8–13 (GGGGKM) and Glu34 each bind NAD(+). NADP(+) is bound at residue Lys35. NAD(+) is bound by residues 98 to 100 (GST) and 122 to 125 (APNM). His155 (proton donor/acceptor) is an active-site residue. His156 is a (S)-2,3,4,5-tetrahydrodipicolinate binding site. Lys159 functions as the Proton donor in the catalytic mechanism. (S)-2,3,4,5-tetrahydrodipicolinate is bound at residue 165–166 (GT).

It belongs to the DapB family.

It localises to the cytoplasm. The enzyme catalyses (S)-2,3,4,5-tetrahydrodipicolinate + NAD(+) + H2O = (2S,4S)-4-hydroxy-2,3,4,5-tetrahydrodipicolinate + NADH + H(+). It catalyses the reaction (S)-2,3,4,5-tetrahydrodipicolinate + NADP(+) + H2O = (2S,4S)-4-hydroxy-2,3,4,5-tetrahydrodipicolinate + NADPH + H(+). It functions in the pathway amino-acid biosynthesis; L-lysine biosynthesis via DAP pathway; (S)-tetrahydrodipicolinate from L-aspartate: step 4/4. Its function is as follows. Catalyzes the conversion of 4-hydroxy-tetrahydrodipicolinate (HTPA) to tetrahydrodipicolinate. This Syntrophus aciditrophicus (strain SB) protein is 4-hydroxy-tetrahydrodipicolinate reductase.